A 155-amino-acid polypeptide reads, in one-letter code: Small ribosomal subunit protein uS7 (155 aa).

The protein belongs to the universal ribosomal protein uS7 family. As to quaternary structure, part of the 30S ribosomal subunit. Contacts proteins S9 and S11.

Its function is as follows. One of the primary rRNA binding proteins, it binds directly to 16S rRNA where it nucleates assembly of the head domain of the 30S subunit. Is located at the subunit interface close to the decoding center, probably blocks exit of the E-site tRNA. This is Small ribosomal subunit protein uS7 from Helicobacter pylori (strain Shi470).